Consider the following 191-residue polypeptide: Orotate phosphoribosyltransferase (191 aa).

114-122 (EDVITTGGS) is a 5-phospho-alpha-D-ribose 1-diphosphate binding site. Orotate is bound by residues Thr118 and Arg146.

This sequence belongs to the purine/pyrimidine phosphoribosyltransferase family. PyrE subfamily. As to quaternary structure, homodimer. Mg(2+) is required as a cofactor.

The enzyme catalyses orotidine 5'-phosphate + diphosphate = orotate + 5-phospho-alpha-D-ribose 1-diphosphate. It participates in pyrimidine metabolism; UMP biosynthesis via de novo pathway; UMP from orotate: step 1/2. Catalyzes the transfer of a ribosyl phosphate group from 5-phosphoribose 1-diphosphate to orotate, leading to the formation of orotidine monophosphate (OMP). This is Orotate phosphoribosyltransferase from Caldicellulosiruptor saccharolyticus (strain ATCC 43494 / DSM 8903 / Tp8T 6331).